Here is a 382-residue protein sequence, read N- to C-terminus: Mannitol-1-phosphate 5-dehydrogenase (382 aa).

3 to 14 serves as a coordination point for NAD(+); that stretch reads AVHFGAGNIGRG.

The protein belongs to the mannitol dehydrogenase family.

It carries out the reaction D-mannitol 1-phosphate + NAD(+) = beta-D-fructose 6-phosphate + NADH + H(+). This Paenarthrobacter aurescens (strain TC1) protein is Mannitol-1-phosphate 5-dehydrogenase.